Reading from the N-terminus, the 104-residue chain is Large ribosomal subunit protein uL23 (104 aa).

This sequence belongs to the universal ribosomal protein uL23 family. In terms of assembly, part of the 50S ribosomal subunit. Contacts protein L29, and trigger factor when it is bound to the ribosome.

One of the early assembly proteins it binds 23S rRNA. One of the proteins that surrounds the polypeptide exit tunnel on the outside of the ribosome. Forms the main docking site for trigger factor binding to the ribosome. The polypeptide is Large ribosomal subunit protein uL23 (Paraburkholderia phymatum (strain DSM 17167 / CIP 108236 / LMG 21445 / STM815) (Burkholderia phymatum)).